A 519-amino-acid chain; its full sequence is Flavonoid 8-hydroxylase 2, chloroplastic (519 aa).

Residues 1 to 46 constitute a chloroplast transit peptide; it reads MEVLQASSLSFQLLRRHSRNNLINKFRNPSLPRIHMPRQNIDLKTF. A Rieske domain is found at 77-188; that stretch reads WYPVASVCDL…SCVRNGIVWF (112 aa). The [2Fe-2S] cluster site is built by Cys-119, His-121, Cys-139, and His-142. Residues His-241 and His-246 each contribute to the Fe cation site. Positions 447–450 match the Redox-active motif motif; that stretch reads CSSC. Transmembrane regions (helical) follow at residues 462–478 and 485–501; these read IGLQ…AAAV and YSMV…SKWL.

[2Fe-2S] cluster serves as cofactor. As to expression, glandular trichome-specific expression in leaves.

The protein resides in the plastid. Its subcellular location is the chloroplast membrane. It is found in the cytoplasm. It catalyses the reaction salvigenin + 2 reduced [2Fe-2S]-[ferredoxin] + O2 + 2 H(+) = 8-hydroxysalvigenin + 2 oxidized [2Fe-2S]-[ferredoxin] + H2O. Its pathway is flavonoid metabolism. Functionally, rieske-type, PAO-family oxygenase involved in the biosynthesis of polymethoxylated flavonoids natural products such as nevadensin and salvigenin, aroma compounds which contribute to the flavor of sweet basil, and exhibit pharmacological activities such as anti-allergic, anti-oxidant, antibacterial, anti-proliferative, and anti-inflammatory effects. Catalyzes the hydroxylation of salvigenin to produce 8-hydroxysalvigenin (8-OH-SALV). This chain is Flavonoid 8-hydroxylase 2, chloroplastic, found in Ocimum basilicum (Sweet basil).